The primary structure comprises 146 residues: Transcription antitermination protein NusB (146 aa).

The protein belongs to the NusB family.

In terms of biological role, involved in transcription antitermination. Required for transcription of ribosomal RNA (rRNA) genes. Binds specifically to the boxA antiterminator sequence of the ribosomal RNA (rrn) operons. The sequence is that of Transcription antitermination protein NusB from Herpetosiphon aurantiacus (strain ATCC 23779 / DSM 785 / 114-95).